The following is a 27-amino-acid chain: uncharacterized protein (27 aa).

It is found in the plastid. Its subcellular location is the chloroplast. This is an uncharacterized protein from Marchantia polymorpha (Common liverwort).